Consider the following 270-residue polypeptide: Probable aquaporin NIP-type (270 aa).

2 helical membrane-spanning segments follow: residues 45–65 (LIAE…SVAV) and 72–92 (VTFP…VYTV). The short motif at 101–103 (NPA) is the NPA 1 element. The next 3 membrane-spanning stretches (helical) occupy residues 121–141 (LYII…ALLF), 160–180 (SLAI…GVAT), and 188–208 (VAGI…GPIS). Residues 213–215 (NPA) carry the NPA 2 motif. A helical transmembrane segment spans residues 231-251 (WVYVVGPIIGTLAGAFVYNLI).

Belongs to the MIP/aquaporin (TC 1.A.8) family. NIP (TC 1.A.8.12) subfamily. Pollen specific.

The protein resides in the membrane. Its function is as follows. Aquaporins facilitate the transport of water and small neutral solutes across cell membranes. The polypeptide is Probable aquaporin NIP-type (Nicotiana alata (Winged tobacco)).